A 195-amino-acid polypeptide reads, in one-letter code: Molybdenum cofactor guanylyltransferase (195 aa).

Residues 12-14 (LAG), lysine 25, asparagine 53, aspartate 70, and aspartate 100 contribute to the GTP site. Aspartate 100 is a binding site for Mg(2+).

It belongs to the MobA family. As to quaternary structure, monomer. Requires Mg(2+) as cofactor.

The protein resides in the cytoplasm. The enzyme catalyses Mo-molybdopterin + GTP + H(+) = Mo-molybdopterin guanine dinucleotide + diphosphate. Its function is as follows. Transfers a GMP moiety from GTP to Mo-molybdopterin (Mo-MPT) cofactor (Moco or molybdenum cofactor) to form Mo-molybdopterin guanine dinucleotide (Mo-MGD) cofactor. The chain is Molybdenum cofactor guanylyltransferase from Vibrio campbellii (strain ATCC BAA-1116).